A 106-amino-acid chain; its full sequence is Small ribosomal subunit protein bS20 (106 aa).

Residues 1–32 (MAQKKPKRNLSALKRHRQSLKRRLRNKAKKSA) show a composition bias toward basic residues. The tract at residues 1 to 33 (MAQKKPKRNLSALKRHRQSLKRRLRNKAKKSAI) is disordered.

The protein belongs to the bacterial ribosomal protein bS20 family.

Binds directly to 16S ribosomal RNA. The polypeptide is Small ribosomal subunit protein bS20 (rpsT) (Thermus thermophilus (strain ATCC BAA-163 / DSM 7039 / HB27)).